The primary structure comprises 255 residues: 1-(5-phosphoribosyl)-5-[(5-phosphoribosylamino)methylideneamino] imidazole-4-carboxamide isomerase (255 aa).

The Proton acceptor role is filled by D8. D129 functions as the Proton donor in the catalytic mechanism.

It belongs to the HisA/HisF family.

The protein resides in the cytoplasm. It carries out the reaction 1-(5-phospho-beta-D-ribosyl)-5-[(5-phospho-beta-D-ribosylamino)methylideneamino]imidazole-4-carboxamide = 5-[(5-phospho-1-deoxy-D-ribulos-1-ylimino)methylamino]-1-(5-phospho-beta-D-ribosyl)imidazole-4-carboxamide. The protein operates within amino-acid biosynthesis; L-histidine biosynthesis; L-histidine from 5-phospho-alpha-D-ribose 1-diphosphate: step 4/9. In Prochlorococcus marinus (strain MIT 9303), this protein is 1-(5-phosphoribosyl)-5-[(5-phosphoribosylamino)methylideneamino] imidazole-4-carboxamide isomerase.